We begin with the raw amino-acid sequence, 526 residues long: GMP synthase [glutamine-hydrolyzing] (526 aa).

The 195-residue stretch at 14–208 (SILIVDFGSQ…VHDICGLAGD (195 aa)) folds into the Glutamine amidotransferase type-1 domain. Cysteine 91 (nucleophile) is an active-site residue. Active-site residues include histidine 182 and glutamate 184. The 193-residue stretch at 209–401 (WTMAEFRQTK…LGMPDVFVDR (193 aa)) folds into the GMPS ATP-PPase domain. Position 236–242 (236–242 (SGGVDSS)) interacts with ATP.

In terms of assembly, homodimer.

The catalysed reaction is XMP + L-glutamine + ATP + H2O = GMP + L-glutamate + AMP + diphosphate + 2 H(+). The protein operates within purine metabolism; GMP biosynthesis; GMP from XMP (L-Gln route): step 1/1. In terms of biological role, catalyzes the synthesis of GMP from XMP. This Zymomonas mobilis subsp. mobilis (strain ATCC 31821 / ZM4 / CP4) protein is GMP synthase [glutamine-hydrolyzing].